The following is a 654-amino-acid chain: Tetratricopeptide repeat protein 30 homolog (654 aa).

7 TPR repeats span residues 10 to 43 (DGEY…STTR), 44 to 76 (AGLS…VPDV), 145 to 178 (ASTK…GGFN), 180 to 212 (HVAY…GIRN), 393 to 426 (CRSA…RAWI), 452 to 485 (SWRL…NYDD), and 535 to 568 (CIVN…GSGA).

The protein belongs to the TTC30/dfy-1/fleer family.

It localises to the cell projection. The protein localises to the cilium. Required for polyglutamylation of axonemal tubulin in sensory cilia. Plays a role in anterograde intraflagellar transport (IFT), the process by which cilia precursors are transported from the base of the cilium to the site of their incorporation at the tip. The sequence is that of Tetratricopeptide repeat protein 30 homolog from Anopheles gambiae (African malaria mosquito).